Consider the following 234-residue polypeptide: Peroxiredoxin (234 aa).

The 156-residue stretch at 6–161 folds into the Thioredoxin domain; that stretch reads PLIGEKLPEM…ILRLLKALQV (156 aa). Residue Cys48 is the Cysteine sulfenic acid (-SOH) intermediate of the active site. A substrate-binding site is contributed by Arg124. A disulfide bridge links Cys203 with Cys209.

The protein belongs to the peroxiredoxin family. Prx6 subfamily. As to quaternary structure, homodecamer. Pentamer of dimers that assemble into a ring structure.

It is found in the cytoplasm. The enzyme catalyses a hydroperoxide + [thioredoxin]-dithiol = an alcohol + [thioredoxin]-disulfide + H2O. Functionally, thiol-specific peroxidase that catalyzes the reduction of hydrogen peroxide and organic hydroperoxides to water and alcohols, respectively. Plays a role in cell protection against oxidative stress by detoxifying peroxides. The polypeptide is Peroxiredoxin (Ignicoccus hospitalis (strain KIN4/I / DSM 18386 / JCM 14125)).